The chain runs to 94 residues: Small ribosomal subunit protein eS24 (94 aa).

Belongs to the eukaryotic ribosomal protein eS24 family.

This chain is Small ribosomal subunit protein eS24, found in Nanoarchaeum equitans (strain Kin4-M).